The following is a 542-amino-acid chain: CTP synthase (542 aa).

The interval 1–265 is amidoligase domain; that stretch reads MTRYVFITGG…DREILAHFQM (265 aa). Serine 13 lines the CTP pocket. A UTP-binding site is contributed by serine 13. ATP-binding positions include 14-19 and aspartate 71; that span reads SLGKGL. Residues aspartate 71 and glutamate 139 each coordinate Mg(2+). CTP is bound by residues 146–148, 186–191, and lysine 222; these read DIE and KTKPTQ. UTP-binding positions include 186-191 and lysine 222; that span reads KTKPTQ. 238-240 is an ATP binding site; it reads RDV. One can recognise a Glutamine amidotransferase type-1 domain in the interval 291-541; it reads TIAIVGKYTG…IAAAIEQSRL (251 aa). Glycine 353 contacts L-glutamine. Catalysis depends on cysteine 380, which acts as the Nucleophile; for glutamine hydrolysis. Residues 381–384, glutamate 404, and arginine 469 contribute to the L-glutamine site; that span reads FGMQ. Catalysis depends on residues histidine 514 and glutamate 516.

It belongs to the CTP synthase family. In terms of assembly, homotetramer.

It catalyses the reaction UTP + L-glutamine + ATP + H2O = CTP + L-glutamate + ADP + phosphate + 2 H(+). The enzyme catalyses L-glutamine + H2O = L-glutamate + NH4(+). The catalysed reaction is UTP + NH4(+) + ATP = CTP + ADP + phosphate + 2 H(+). The protein operates within pyrimidine metabolism; CTP biosynthesis via de novo pathway; CTP from UDP: step 2/2. Allosterically activated by GTP, when glutamine is the substrate; GTP has no effect on the reaction when ammonia is the substrate. The allosteric effector GTP functions by stabilizing the protein conformation that binds the tetrahedral intermediate(s) formed during glutamine hydrolysis. Inhibited by the product CTP, via allosteric rather than competitive inhibition. Functionally, catalyzes the ATP-dependent amination of UTP to CTP with either L-glutamine or ammonia as the source of nitrogen. Regulates intracellular CTP levels through interactions with the four ribonucleotide triphosphates. This chain is CTP synthase, found in Methylorubrum populi (strain ATCC BAA-705 / NCIMB 13946 / BJ001) (Methylobacterium populi).